Here is an 89-residue protein sequence, read N- to C-terminus: Large ribosomal subunit protein eL37A (89 aa).

4 residues coordinate Zn(2+): C19, C22, C34, and C37. The C4-type zinc finger occupies 19–37 (CRRCGKRSFHIQKSTCACC).

Belongs to the eukaryotic ribosomal protein eL37 family. Component of the large ribosomal subunit (LSU). Mature yeast ribosomes consist of a small (40S) and a large (60S) subunit. The 40S small subunit contains 1 molecule of ribosomal RNA (18S rRNA) and at least 33 different proteins. The large 60S subunit contains 3 rRNA molecules (25S, 5.8S and 5S rRNA) and at least 46 different proteins. Zn(2+) is required as a cofactor.

The protein resides in the cytoplasm. In terms of biological role, component of the ribosome, a large ribonucleoprotein complex responsible for the synthesis of proteins in the cell. The small ribosomal subunit (SSU) binds messenger RNAs (mRNAs) and translates the encoded message by selecting cognate aminoacyl-transfer RNA (tRNA) molecules. The large subunit (LSU) contains the ribosomal catalytic site termed the peptidyl transferase center (PTC), which catalyzes the formation of peptide bonds, thereby polymerizing the amino acids delivered by tRNAs into a polypeptide chain. The nascent polypeptides leave the ribosome through a tunnel in the LSU and interact with protein factors that function in enzymatic processing, targeting, and the membrane insertion of nascent chains at the exit of the ribosomal tunnel. The sequence is that of Large ribosomal subunit protein eL37A (rpl3703) from Schizosaccharomyces pombe (strain 972 / ATCC 24843) (Fission yeast).